The chain runs to 530 residues: MSVDTYTETTKIDKLLKKPTSHFQLSTTQLYNKILDNNEGVLTELGAVNASTGKYTGRSPKDKFFVSEPSYRDNIDWGEINQPIDEETFLKLYHKVLDYLDKKDELYVFKGYAGSDKDTMLKLTVINELAWHNLFAKNMFIRPESKEEATKIKPNFTIVSVPHFKADPEVDGTKSETFVIISFKHKVILIGGTEYAGEMKKGIFSVMNYLLPMQDIMSMHCSANVGEKGDVALFFGLSGTGKTTLSADPHRKLIGDDEHGWNKNGVFNIEGGCYAKAINLSKEKEPQIFDAIKYGAILENTVVAEDGSVDFEDNRYTENTRAAYPINHIDNIVVPSKAAHPNTIIFLTADAFGVIPPISKLNKDQAMYHFLSGFTSKLAGTERGVTEPEPSFSTCFGAPFFPLHPTVYADLLGELIDLHDVDVYLVNTGWTGGKYGVGRRISLHYTRQMVNQAISGKLKNAEYTKDSTFGLSIPVEIEDVPKTILNPINAWSDKEKYKAQAEDLIQRFEKNFEKFGEKVEHIAKKGSFNK.

3 residues coordinate substrate: Arg-58, Tyr-195, and Lys-201. ATP contacts are provided by residues Lys-201, His-220, and Gly-236–Thr-244. Positions 201 and 220 each coordinate Mn(2+). Asp-257 is a binding site for Mn(2+). ATP contacts are provided by residues Glu-285, Arg-321, Arg-440–Ile-441, and Thr-446. Substrate is bound at residue Arg-321.

It belongs to the phosphoenolpyruvate carboxykinase (ATP) family. The cofactor is Mn(2+).

The protein resides in the cytoplasm. It carries out the reaction oxaloacetate + ATP = phosphoenolpyruvate + ADP + CO2. It participates in carbohydrate biosynthesis; gluconeogenesis. In terms of biological role, involved in the gluconeogenesis. Catalyzes the conversion of oxaloacetate (OAA) to phosphoenolpyruvate (PEP) through direct phosphoryl transfer between the nucleoside triphosphate and OAA. This Staphylococcus aureus (strain bovine RF122 / ET3-1) protein is Phosphoenolpyruvate carboxykinase (ATP).